We begin with the raw amino-acid sequence, 240 residues long: Sulfite dehydrogenase subunit B (240 aa).

4Fe-4S ferredoxin-type domains are found at residues Leu4–Pro34, Thr64–Asp95, and Gly97–Gln126. Residues Cys13, Cys16, Cys19, Cys23, Cys73, Cys76, Cys81, Cys85, Cys106, Cys109, Cys112, and Cys116 each coordinate [4Fe-4S] cluster.

As to quaternary structure, forms a heterotrimeric membrane-bound complex composed of a catalytic heterodimer (SoeAB) and a membrane anchor protein (SoeC). It depends on [4Fe-4S] cluster as a cofactor.

The protein resides in the cell inner membrane. Its function is as follows. Part of the SoeABC complex that catalyzes the oxidation of sulfite to sulfate. SoeB is probably the electron transfer subunit. The polypeptide is Sulfite dehydrogenase subunit B (Allochromatium vinosum (strain ATCC 17899 / DSM 180 / NBRC 103801 / NCIMB 10441 / D) (Chromatium vinosum)).